The primary structure comprises 503 residues: Putative ribose/galactose/methyl galactoside import ATP-binding protein (503 aa).

2 ABC transporter domains span residues 7–244 (LEMI…VGRE) and 254–498 (VPIG…TGQL). 39-46 (GENGAGKS) contacts ATP.

It belongs to the ABC transporter superfamily. Carbohydrate importer 2 (CUT2) (TC 3.A.1.2) family.

The protein localises to the cell membrane. The enzyme catalyses D-ribose(out) + ATP + H2O = D-ribose(in) + ADP + phosphate + H(+). The catalysed reaction is D-galactose(out) + ATP + H2O = D-galactose(in) + ADP + phosphate + H(+). Functionally, part of an ABC transporter complex involved in carbohydrate import. Could be involved in ribose, galactose and/or methyl galactoside import. Responsible for energy coupling to the transport system. The sequence is that of Putative ribose/galactose/methyl galactoside import ATP-binding protein from Geobacillus kaustophilus (strain HTA426).